The following is a 120-amino-acid chain: Ribosome-binding factor A (120 aa).

It belongs to the RbfA family. In terms of assembly, monomer. Binds 30S ribosomal subunits, but not 50S ribosomal subunits or 70S ribosomes.

It is found in the cytoplasm. Its function is as follows. One of several proteins that assist in the late maturation steps of the functional core of the 30S ribosomal subunit. Associates with free 30S ribosomal subunits (but not with 30S subunits that are part of 70S ribosomes or polysomes). Required for efficient processing of 16S rRNA. May interact with the 5'-terminal helix region of 16S rRNA. In Rickettsia conorii (strain ATCC VR-613 / Malish 7), this protein is Ribosome-binding factor A.